The chain runs to 1381 residues: Hepatocyte growth factor receptor (1381 aa).

Residues 1 to 24 (MKAPAVLAPGILVLLFTLVQRSNG) form the signal peptide. The Extracellular portion of the chain corresponds to 25–932 (ECKEALAKSE…VIVQPDQNFT (908 aa)). In terms of domain architecture, Sema spans 27 to 515 (KEALAKSEMN…TGKKITKIPL (489 aa)). Asn45 carries N-linked (GlcNAc...) asparagine glycosylation. Disulfide bonds link Cys95/Cys101, Cys98/Cys160, Cys133/Cys141, and Cys172/Cys175. N-linked (GlcNAc...) asparagine glycosylation is present at Asn106. Asn149 carries an N-linked (GlcNAc...) asparagine glycan. Asn202 carries N-linked (GlcNAc...) asparagine glycosylation. 2 cysteine pairs are disulfide-bonded: Cys298/Cys363 and Cys385/Cys397. N-linked (GlcNAc...) asparagine glycans are attached at residues Asn399 and Asn405. 4 disulfide bridges follow: Cys520–Cys538, Cys526–Cys561, Cys529–Cys545, and Cys541–Cys551. IPT/TIG domains follow at residues 563 to 655 (PAIY…FSYV), 657 to 739 (PIIT…FSYR), and 742 to 836 (PIVY…LIYV). The O-linked (Man) threonine glycan is linked to Thr582. Asn607 and Asn635 each carry an N-linked (GlcNAc...) asparagine glycan. 2 O-linked (Man) threonine glycosylation sites follow: Thr676 and Thr761. Residues Asn785, Asn879, and Asn930 are each glycosylated (N-linked (GlcNAc...) asparagine). A helical transmembrane segment spans residues 933–955 (GLIAGVVSISIALLLLLGLFLWL). The Cytoplasmic segment spans residues 956-1381 (KKRKQIKDLG…EDNADDEVDT (426 aa)). Residue Ser966 is modified to Phosphoserine. Thr977 is subject to Phosphothreonine. 3 positions are modified to phosphoserine: Ser990, Ser997, and Ser1000. At Tyr1003 the chain carries Phosphotyrosine. One can recognise a Protein kinase domain in the interval 1078-1345 (VHFNEVIGRG…RISAIFSTFI (268 aa)). Residues 1084–1092 (IGRGHFGCV) and Lys1110 contribute to the ATP site. Asp1204 acts as the Proton acceptor in catalysis. The interaction with RANBP9 stretch occupies residues 1212 to 1381 (LDEKFTVKVA…EDNADDEVDT (170 aa)). Tyr1230 is modified (phosphotyrosine). 2 positions are modified to phosphotyrosine; by autocatalysis: Tyr1234 and Tyr1235. The residue at position 1289 (Thr1289) is a Phosphothreonine. The interaction with MUC20 stretch occupies residues 1320–1359 (WHPKAEMRPSFSELVSRISAIFSTFIGEHYVHVNATYVNV). Phosphotyrosine; by autocatalysis is present on residues Tyr1349 and Tyr1356. The residue at position 1365 (Tyr1365) is a Phosphotyrosine.

It belongs to the protein kinase superfamily. Tyr protein kinase family. As to quaternary structure, heterodimer made of an alpha chain (50 kDa) and a beta chain (145 kDa) which are disulfide linked. Binds PLXNB1. Interacts when phosphorylated with downstream effectors including STAT3, PIK3R1, SRC, PCLG1, GRB2 and GAB1. Interacts with SPSB1, SPSB2 and SPSB4. Interacts with INPP5D/SHIP1. When phosphorylated at Tyr-1356, interacts with INPPL1/SHIP2. Interacts with RANBP9 and RANBP10, as well as SPSB1, SPSB2, SPSB3 and SPSB4. SPSB1 binding occurs in the presence and in the absence of HGF, however HGF treatment has a positive effect on this interaction. Interacts with MUC20; prevents interaction with GRB2 and suppresses hepatocyte growth factor-induced cell proliferation. Interacts with GRB10. Interacts with PTPN1 and PTPN2. Interacts with HSP90AA1 and HSP90AB1; the interaction suppresses MET kinase activity. Interacts with tensin TNS3. Interacts (when phosphorylated) with tensin TNS4 (via SH2 domain); the interaction increases MET protein stability by inhibiting MET endocytosis and subsequent lysosomal degradation. Autophosphorylated in response to ligand binding on Tyr-1234 and Tyr-1235 in the kinase domain leading to further phosphorylation of Tyr-1349 and Tyr-1356 in the C-terminal multifunctional docking site. Dephosphorylated by PTPRJ at Tyr-1349 and Tyr-1365. Dephosphorylated by PTPN1 and PTPN2. In terms of processing, ubiquitinated. Ubiquitination by CBL regulates the receptor stability and activity through proteasomal degradation. Post-translationally, O-mannosylation of IPT/TIG domains by TMEM260 is required for protein maturation. O-mannosylated residues are composed of single mannose glycans that are not elongated or modified.

The protein resides in the membrane. It carries out the reaction L-tyrosyl-[protein] + ATP = O-phospho-L-tyrosyl-[protein] + ADP + H(+). Its activity is regulated as follows. In its inactive state, the C-terminal tail interacts with the catalytic domain and inhibits the kinase activity. Upon ligand binding, the C-terminal tail is displaced and becomes phosphorylated, thus increasing the kinase activity. Functionally, receptor tyrosine kinase that transduces signals from the extracellular matrix into the cytoplasm by binding to hepatocyte growth factor/HGF ligand. Regulates many physiological processes including proliferation, scattering, morphogenesis and survival. Ligand binding at the cell surface induces autophosphorylation of MET on its intracellular domain that provides docking sites for downstream signaling molecules. Following activation by ligand, interacts with the PI3-kinase subunit PIK3R1, PLCG1, SRC, GRB2, STAT3 or the adapter GAB1. Recruitment of these downstream effectors by MET leads to the activation of several signaling cascades including the RAS-ERK, PI3 kinase-AKT, or PLCgamma-PKC. The RAS-ERK activation is associated with the morphogenetic effects while PI3K/AKT coordinates prosurvival effects. During embryonic development, MET signaling plays a role in gastrulation, development and migration of muscles and neuronal precursors, angiogenesis and kidney formation. In adults, participates in wound healing as well as organ regeneration and tissue remodeling. Also promotes differentiation and proliferation of hematopoietic cells. The chain is Hepatocyte growth factor receptor (MET) from Colobus guereza (Mantled guereza).